We begin with the raw amino-acid sequence, 501 residues long: Nuclear receptor-binding protein 2 (501 aa).

Residues methionine 1 to proline 33 are disordered. Basic and acidic residues predominate over residues alanine 7 to glutamate 19. The span at aspartate 20–glutamate 30 shows a compositional bias: acidic residues. Residues glutamine 38–leucine 306 form the Protein kinase domain. A phosphothreonine mark is found at threonine 409 and threonine 411.

It belongs to the protein kinase superfamily. Ser/Thr protein kinase family.

It is found in the cytoplasm. In terms of biological role, may regulate apoptosis of neural progenitor cells during their differentiation. This chain is Nuclear receptor-binding protein 2, found in Homo sapiens (Human).